The chain runs to 199 residues: uncharacterized protein (199 aa).

Residues 1–28 (MKKLATVGSLIVTSTLVFSSMPFQNAHA) form the signal peptide.

It localises to the secreted. This is an uncharacterized protein from Staphylococcus aureus (strain NCTC 8325 / PS 47).